We begin with the raw amino-acid sequence, 612 residues long: Proton pump-interactor 1 (612 aa).

A disordered region spans residues 1 to 58 (MGVEVVNSGGFEVAPAPFEGKPEKNGKLDQGKGDDAPINFGSVGELPKNAEENNNKVV). Over residues 20–35 (GKPEKNGKLDQGKGDD) the composition is skewed to basic and acidic residues. 2 coiled-coil regions span residues 90–113 (PKIKAKLDLADKELEKLNKARTGV) and 251–314 (LDGV…NSEY). Composition is skewed to basic and acidic residues over residues 374–387 (LSRDGRMRNPDEKP), 434–446 (EKAKDAVKVKNVA), 459–498 (PQKEEKPVDAATAKEMRKQEEIAKAKQAMERKKKLAEKAA), and 505–519 (AQKEAEKKEKKEQEK). The segment at 374-572 (LSRDGRMRNP…PIRNRTRGRG (199 aa)) is disordered. Residues 466–526 (VDAATAKEMR…QEKKAKKKTG (61 aa)) are a coiled coil. Over residues 531–545 (TETEEVPEASEEEIE) the composition is skewed to acidic residues. Residue Ser540 is modified to Phosphoserine. Residues 549–564 (QEEKPQKEKVFKEKPI) are compositionally biased toward basic and acidic residues. The chain crosses the membrane as a helical span at residues 591 to 611 (VYAAPAALVVLLLLVLGYYYV).

It belongs to the plant Proton pump-interactor protein family. In terms of assembly, interacts with AHA1 via N-terminal region. As to expression, strongly expressed in root and shoot vascular systems, particularly in meristematic and sink tissues. Also present in pollen, stigmas and siliques, but not in developing embryos.

The protein localises to the cell membrane. The protein resides in the endoplasmic reticulum membrane. In terms of biological role, promotes AHA1 plasma membrane ATPase activity by binding to a site different from the 14-3-3 binding site. The protein is Proton pump-interactor 1 (PPI1) of Arabidopsis thaliana (Mouse-ear cress).